The sequence spans 101 residues: Integration host factor subunit beta (101 aa).

This sequence belongs to the bacterial histone-like protein family. Heterodimer of an alpha and a beta chain.

This protein is one of the two subunits of integration host factor, a specific DNA-binding protein that functions in genetic recombination as well as in transcriptional and translational control. The protein is Integration host factor subunit beta of Nitrobacter hamburgensis (strain DSM 10229 / NCIMB 13809 / X14).